We begin with the raw amino-acid sequence, 84 residues long: Envelope small membrane protein (84 aa).

Topologically, residues 1–18 are virion surface; the sequence is MFMADAYLADTVWYVGQI. Residues 19–39 traverse the membrane as a helical segment; that stretch reads IFIVAICLLVIIVVVAFLATF. Over 40–80 the chain is Intravirion; it reads KLCIQLCGMCNTLVLSPSIYVFNRGRQFYEFYNDVKPPVLD.

The protein belongs to the betacoronaviruses E protein family. As to quaternary structure, homopentamer. Interacts with membrane protein M in the budding compartment of the host cell, which is located between endoplasmic reticulum and the Golgi complex. Interacts with Nucleoprotein.

It localises to the host Golgi apparatus membrane. In terms of biological role, plays a central role in virus morphogenesis and assembly. Acts as a viroporin and self-assembles in host membranes forming pentameric protein-lipid pores that allow ion transport. Also plays a role in the induction of apoptosis. This Porcine hemagglutinating encephalomyelitis virus (strain 67N) (HEV-67N) protein is Envelope small membrane protein.